Consider the following 354-residue polypeptide: Protein angel (354 aa).

Residues 22-59 form a disordered region; the sequence is VSSQAKGASGKRKQKAKEMESSHDRNRRWTSLGNQAEG.

The protein belongs to the CCR4/nocturin family. As to expression, ubiquitously expressed in embryos.

In Drosophila melanogaster (Fruit fly), this protein is Protein angel (angel).